Consider the following 594-residue polypeptide: Segmentation polarity homeobox protein engrailed (594 aa).

7 disordered regions span residues 1–64, 76–127, 141–164, 198–217, 231–299, 387–458, and 474–501; these read MALE…TRDE, IKQE…PASI, KATA…ISPG, HYYQ…PQRA, ISKS…PTGS, AGTG…GSEN, and DRPS…RPRT. Residues 22–60 show a composition bias toward low complexity; sequence SQSPTSTTTVTMATASPVPACTTTTTTTSTSGASAASSP. Positions 92–112 are enriched in basic residues; it reads PHHHQHPHHHQLPHHPHHQHH. The span at 151-164 shows a compositional bias: pro residues; the sequence is HPQPPAIREPISPG. Over residues 237 to 247 the composition is skewed to polar residues; the sequence is LCSSNGSSSAT. Low complexity-rich tracts occupy residues 278–299 and 387–402; these read ASPS…PTGS and AGTG…ANGA. Composition is skewed to polar residues over residues 426-436 and 448-458; these read SSETNGSSSQD and ETSSTKDGSEN. The span at 487-499 shows a compositional bias: basic and acidic residues; sequence QPKEKGDSEEKRP. A DNA-binding region (homeobox) is located at residues 496 to 555; the sequence is EKRPRTAFSNAQLQRLKNEFNENRYLTEKRRQTLSAELGLNEAQIKIWFQNKRAKIKKSS.

The protein belongs to the engrailed homeobox family.

It localises to the nucleus. In terms of biological role, this protein specifies the body segmentation pattern. It is required for the development of the central nervous system. Transcriptional regulator that repress activated promoters. The protein is Segmentation polarity homeobox protein engrailed (en) of Anopheles gambiae (African malaria mosquito).